The primary structure comprises 496 residues: Cytochrome P450 71B12 (496 aa).

Residues 2–22 (SLWYIIVAFVFFSSMIIVRII) form a helical membrane-spanning segment. Cys-436 is a heme binding site.

It belongs to the cytochrome P450 family. Heme serves as cofactor.

The protein resides in the membrane. This chain is Cytochrome P450 71B12 (CYP71B12), found in Arabidopsis thaliana (Mouse-ear cress).